The chain runs to 822 residues: Molybdenum cofactor sulfurase (822 aa).

The residue at position 245 (K245) is an N6-(pyridoxal phosphate)lysine. C412 is an active-site residue. The MOSC domain occupies L658 to I814.

Belongs to the class-V pyridoxal-phosphate-dependent aminotransferase family. MOCOS subfamily. It depends on pyridoxal 5'-phosphate as a cofactor.

The enzyme catalyses Mo-molybdopterin + L-cysteine + AH2 = thio-Mo-molybdopterin + L-alanine + A + H2O. The protein operates within cofactor biosynthesis; molybdopterin biosynthesis. Its function is as follows. Sulfurates the molybdenum cofactor. Sulfation of molybdenum is essential for xanthine dehydrogenase (XDH) and aldehyde oxidase (ADO) enzymes in which molybdenum cofactor is liganded by 1 oxygen and 1 sulfur atom in active form. In Bombyx mori (Silk moth), this protein is Molybdenum cofactor sulfurase.